We begin with the raw amino-acid sequence, 115 residues long: Non-specific lipid-transfer protein 4.2 (115 aa).

Positions 1–25 are cleaved as a signal peptide; it reads MARAAATQLVLVAMVAAMLIVATDA. Intrachain disulfides connect Cys-29/Cys-77, Cys-39/Cys-54, Cys-55/Cys-97, and Cys-75/Cys-111.

It belongs to the plant LTP family.

In terms of biological role, plant non-specific lipid-transfer proteins transfer phospholipids as well as galactolipids across membranes. May play a role in wax or cutin deposition in the cell walls of expanding epidermal cells and certain secretory tissues. This Hordeum vulgare (Barley) protein is Non-specific lipid-transfer protein 4.2 (LTP4.2).